Reading from the N-terminus, the 270-residue chain is Formamidopyrimidine-DNA glycosylase (270 aa).

The active-site Schiff-base intermediate with DNA is the proline 2. Glutamate 3 (proton donor) is an active-site residue. Lysine 58 (proton donor; for beta-elimination activity) is an active-site residue. The DNA site is built by histidine 91, arginine 110, and lysine 151. An FPG-type zinc finger spans residues 236-270 (FVYGRGGQPCKVCGTTLREIKLGQRASVYCPKCQR). The active-site Proton donor; for delta-elimination activity is arginine 260.

The protein belongs to the FPG family. As to quaternary structure, monomer. The cofactor is Zn(2+).

It carries out the reaction Hydrolysis of DNA containing ring-opened 7-methylguanine residues, releasing 2,6-diamino-4-hydroxy-5-(N-methyl)formamidopyrimidine.. The enzyme catalyses 2'-deoxyribonucleotide-(2'-deoxyribose 5'-phosphate)-2'-deoxyribonucleotide-DNA = a 3'-end 2'-deoxyribonucleotide-(2,3-dehydro-2,3-deoxyribose 5'-phosphate)-DNA + a 5'-end 5'-phospho-2'-deoxyribonucleoside-DNA + H(+). In terms of biological role, involved in base excision repair of DNA damaged by oxidation or by mutagenic agents. Acts as a DNA glycosylase that recognizes and removes damaged bases. Has a preference for oxidized purines, such as 7,8-dihydro-8-oxoguanine (8-oxoG). Has AP (apurinic/apyrimidinic) lyase activity and introduces nicks in the DNA strand. Cleaves the DNA backbone by beta-delta elimination to generate a single-strand break at the site of the removed base with both 3'- and 5'-phosphates. In Pseudomonas savastanoi pv. phaseolicola (strain 1448A / Race 6) (Pseudomonas syringae pv. phaseolicola (strain 1448A / Race 6)), this protein is Formamidopyrimidine-DNA glycosylase.